The chain runs to 356 residues: NAC domain-containing protein JA2L (356 aa).

The NAC domain occupies 14-162; that stretch reads LPPGFRFYPT…DWVLCRIYKK (149 aa). The DNA-binding element occupies 111 to 168; the sequence is VGIKKALVFYIGKAPKGTKTNWIMHEYRLSEPTTKTGSSRLDDWVLCRIYKKNSGGQK. Positions 163–191 are disordered; that stretch reads NSGGQKSSCSDLQNKDISHASSSSSSSQF. Residues 164 to 174 are compositionally biased toward polar residues; sequence SGGQKSSCSDL.

Expressed in guard cells of the epidermis.

It localises to the nucleus. In terms of biological role, transcription factor that acts downstream of MYC2 in the jasmonate-mediated response to Botrytis cinerea infection. With MYC2 forms a transcription module that regulates wounding-responsive genes. Involved in jasmonate- and coronatine-mediated stomatal reopening in response to Pseudomonas syringae pv tomato DC3000 infection. Regulates the expression of threonine deaminase 2 (TD2) through promoter binding. This Solanum lycopersicum (Tomato) protein is NAC domain-containing protein JA2L.